The sequence spans 110 residues: Cytochrome c (110 aa).

Heme c is bound by residues Cys21, Cys24, His25, and Met87.

Belongs to the cytochrome c family. In terms of processing, binds 1 heme c group covalently per subunit.

Its subcellular location is the mitochondrion intermembrane space. Its function is as follows. Electron carrier protein. The oxidized form of the cytochrome c heme group can accept an electron from the heme group of the cytochrome c1 subunit of cytochrome reductase. Cytochrome c then transfers this electron to the cytochrome oxidase complex, the final protein carrier in the mitochondrial electron-transport chain. The polypeptide is Cytochrome c (CYCK) (Kluyveromyces lactis (strain ATCC 8585 / CBS 2359 / DSM 70799 / NBRC 1267 / NRRL Y-1140 / WM37) (Yeast)).